Consider the following 143-residue polypeptide: Large ribosomal subunit protein uL15 (143 aa).

Positions Met1–Glu51 are disordered. The segment covering Arg21–Ala31 has biased composition (gly residues).

Belongs to the universal ribosomal protein uL15 family. As to quaternary structure, part of the 50S ribosomal subunit.

Functionally, binds to the 23S rRNA. In Methylibium petroleiphilum (strain ATCC BAA-1232 / LMG 22953 / PM1), this protein is Large ribosomal subunit protein uL15.